The following is a 183-amino-acid chain: MYKTWRLCRTHTVGGLCHDGSHRFVSTGGAKIGKKFENMNQIRDYLSRPVWSVHEYLGINTKEEKLEPPSAEAVKKLLRLSGLPLEGADIKEIQMRLAKQLSFINKLHNIPVEGEKHTKEYDARLVQRNTKQLNYTKLLEGISHQKQDAELGEVSGSWKATGLAAESKNAYFVVKEGLLKNRK.

The protein belongs to the GatF family. As to quaternary structure, subunit of the heterotrimeric GatFAB amidotransferase (AdT) complex, composed of A (HER2), B (PET112) and F (YGR102C) subunits.

It is found in the mitochondrion inner membrane. The catalysed reaction is L-glutamyl-tRNA(Gln) + L-glutamine + ATP + H2O = L-glutaminyl-tRNA(Gln) + L-glutamate + ADP + phosphate + H(+). Functionally, allows the formation of correctly charged Gln-tRNA(Gln) through the transamidation of misacylated Glu-tRNA(Gln) in the mitochondria. The reaction takes place in the presence of glutamine and ATP through an activated gamma-phospho-Glu-tRNA(Gln). Required for proper protein synthesis within the mitochondrion. This is Glutamyl-tRNA(Gln) amidotransferase subunit F, mitochondrial from Saccharomyces cerevisiae (strain ATCC 204508 / S288c) (Baker's yeast).